A 403-amino-acid chain; its full sequence is S-adenosylmethionine synthase (403 aa).

His-15 contributes to the ATP binding site. Residue Asp-17 participates in Mg(2+) binding. K(+) is bound at residue Glu-43. L-methionine contacts are provided by Glu-56 and Gln-99. The segment at 99 to 109 (QSPHIAQGVDR) is flexible loop. ATP contacts are provided by residues 166–168 (DAK), 232–233 (KF), Asp-241, 247–248 (RK), Ala-264, and Lys-268. Residue Asp-241 coordinates L-methionine. Residue Lys-272 coordinates L-methionine.

The protein belongs to the AdoMet synthase family. Homotetramer; dimer of dimers. It depends on Mg(2+) as a cofactor. K(+) is required as a cofactor.

Its subcellular location is the cytoplasm. It carries out the reaction L-methionine + ATP + H2O = S-adenosyl-L-methionine + phosphate + diphosphate. Its pathway is amino-acid biosynthesis; S-adenosyl-L-methionine biosynthesis; S-adenosyl-L-methionine from L-methionine: step 1/1. Catalyzes the formation of S-adenosylmethionine (AdoMet) from methionine and ATP. The overall synthetic reaction is composed of two sequential steps, AdoMet formation and the subsequent tripolyphosphate hydrolysis which occurs prior to release of AdoMet from the enzyme. The protein is S-adenosylmethionine synthase of Stenotrophomonas maltophilia (strain K279a).